The following is a 437-amino-acid chain: Adenylosuccinate synthetase (437 aa).

GTP contacts are provided by residues 12-18 (GDEGKGK) and 40-42 (GHT). The Proton acceptor role is filled by Asp13. Positions 13 and 40 each coordinate Mg(2+). IMP is bound by residues 13–16 (DEGK), 38–41 (NAGH), Thr128, Arg142, Gln223, Thr238, and Arg302. The Proton donor role is filled by His41. Substrate is bound at residue 298 to 304 (TTTGRRR). Residues Arg304, 330–332 (KLD), and 412–414 (SLG) each bind GTP.

It belongs to the adenylosuccinate synthetase family. In terms of assembly, homodimer. Requires Mg(2+) as cofactor.

The protein localises to the cytoplasm. It carries out the reaction IMP + L-aspartate + GTP = N(6)-(1,2-dicarboxyethyl)-AMP + GDP + phosphate + 2 H(+). It participates in purine metabolism; AMP biosynthesis via de novo pathway; AMP from IMP: step 1/2. Functionally, plays an important role in the de novo pathway of purine nucleotide biosynthesis. Catalyzes the first committed step in the biosynthesis of AMP from IMP. The chain is Adenylosuccinate synthetase from Prochlorococcus marinus (strain MIT 9211).